A 424-amino-acid chain; its full sequence is Elongation factor 1-alpha (424 aa).

Residues 5–223 (KPHLNLITIG…DAFKVPEKPI (219 aa)) form the tr-type G domain. A G1 region spans residues 14 to 21 (GHVDHGKS). 14-21 (GHVDHGKS) contacts GTP. Residue S21 coordinates Mg(2+). The G2 stretch occupies residues 70 to 74 (GVTID). The segment at 91 to 94 (DAPG) is G3. GTP is bound by residues 91–95 (DAPGH) and 148–151 (NKMD). A G4 region spans residues 148-151 (NKMD). A G5 region spans residues 187–189 (SGY).

This sequence belongs to the TRAFAC class translation factor GTPase superfamily. Classic translation factor GTPase family. EF-Tu/EF-1A subfamily.

The protein localises to the cytoplasm. It catalyses the reaction GTP + H2O = GDP + phosphate + H(+). In terms of biological role, GTP hydrolase that promotes the GTP-dependent binding of aminoacyl-tRNA to the A-site of ribosomes during protein biosynthesis. The chain is Elongation factor 1-alpha from Thermoplasma volcanium (strain ATCC 51530 / DSM 4299 / JCM 9571 / NBRC 15438 / GSS1).